The sequence spans 330 residues: Aspartate--ammonia ligase (330 aa).

Belongs to the class-II aminoacyl-tRNA synthetase family. AsnA subfamily.

It is found in the cytoplasm. It carries out the reaction L-aspartate + NH4(+) + ATP = L-asparagine + AMP + diphosphate + H(+). It participates in amino-acid biosynthesis; L-asparagine biosynthesis; L-asparagine from L-aspartate (ammonia route): step 1/1. This chain is Aspartate--ammonia ligase, found in Salmonella agona (strain SL483).